The primary structure comprises 248 residues: Ubiquinone biosynthesis O-methyltransferase (248 aa).

S-adenosyl-L-methionine-binding residues include R41, G72, D93, and M136.

It belongs to the methyltransferase superfamily. UbiG/COQ3 family.

The enzyme catalyses a 3-demethylubiquinol + S-adenosyl-L-methionine = a ubiquinol + S-adenosyl-L-homocysteine + H(+). The catalysed reaction is a 3-(all-trans-polyprenyl)benzene-1,2-diol + S-adenosyl-L-methionine = a 2-methoxy-6-(all-trans-polyprenyl)phenol + S-adenosyl-L-homocysteine + H(+). The protein operates within cofactor biosynthesis; ubiquinone biosynthesis. O-methyltransferase that catalyzes the 2 O-methylation steps in the ubiquinone biosynthetic pathway. The sequence is that of Ubiquinone biosynthesis O-methyltransferase from Brucella abortus (strain 2308).